Consider the following 167-residue polypeptide: Interferon gamma (167 aa).

A signal peptide spans 1-23; the sequence is MSYTSYILAFQLCLILGSYGCYC. At Q24 the chain carries Pyrrolidone carboxylic acid. 3 N-linked (GlcNAc...) asparagine glycosylation sites follow: N41, N108, and N117.

The protein belongs to the type II (or gamma) interferon family. Homodimer. Interacts with IFNGR1 (via extracellular domain); this interaction promotes IFNGR1 dimerization. As to expression, released primarily from activated T lymphocytes.

It is found in the secreted. Its function is as follows. Type II interferon produced by immune cells such as T-cells and NK cells that plays crucial roles in antimicrobial, antiviral, and antitumor responses by activating effector immune cells and enhancing antigen presentation. Primarily signals through the JAK-STAT pathway after interaction with its receptor IFNGR1 to affect gene regulation. Upon IFNG binding, IFNGR1 intracellular domain opens out to allow association of downstream signaling components JAK2, JAK1 and STAT1, leading to STAT1 activation, nuclear translocation and transcription of IFNG-regulated genes. Many of the induced genes are transcription factors such as IRF1 that are able to further drive regulation of a next wave of transcription. Plays a role in class I antigen presentation pathway by inducing a replacement of catalytic proteasome subunits with immunoproteasome subunits. In turn, increases the quantity, quality, and repertoire of peptides for class I MHC loading. Increases the efficiency of peptide generation also by inducing the expression of activator PA28 that associates with the proteasome and alters its proteolytic cleavage preference. Up-regulates as well MHC II complexes on the cell surface by promoting expression of several key molecules such as cathepsins B/CTSB, H/CTSH, and L/CTSL. Participates in the regulation of hematopoietic stem cells during development and under homeostatic conditions by affecting their development, quiescence, and differentiation. The polypeptide is Interferon gamma (IFNG) (Oryctolagus cuniculus (Rabbit)).